The chain runs to 324 residues: MTPLTLMNLMIMTLSYIIPILIAVAFLTLVERKILSYMQARKGPNIVGPFGLLQPIADGVKLFIKEPIRPSTSSPFLFIMTPILALLLALTIWIPLPLPFPMADLNLGLLFLLAMSSLTVYSLLWSGWASNSKYALIGALRAVAQTISYEVTLAIILLSTIMLSGNYTLSTLSITQEPIYLIFSSWPLAMMWYISTLAETNRAPFDLTEGESELVSGFNVEYAAGPFALFFLAEYANIMLMNTLTITLFLNPSFLNLPSELFSITLATKVLLLSSSFLWVRASYPRFRYDQLMHLLWKNFLPLTLALCLWHTSMPISYAGLPPA.

A run of 8 helical transmembrane segments spans residues 10–30, 76–96, 107–127, 143–163, 178–198, 229–249, 260–280, and 300–320; these read MIMTLSYIIPILIAVAFLTLV, FLFIMTPILALLLALTIWIPL, LGLLFLLAMSSLTVYSLLWSG, VAQTISYEVTLAIILLSTIML, PIYLIFSSWPLAMMWYISTLA, LFFLAEYANIMLMNTLTITLF, ELFSITLATKVLLLSSSFLWV, and FLPLTLALCLWHTSMPISYAG.

It belongs to the complex I subunit 1 family.

It localises to the mitochondrion inner membrane. The catalysed reaction is a ubiquinone + NADH + 5 H(+)(in) = a ubiquinol + NAD(+) + 4 H(+)(out). Its function is as follows. Core subunit of the mitochondrial membrane respiratory chain NADH dehydrogenase (Complex I) that is believed to belong to the minimal assembly required for catalysis. Complex I functions in the transfer of electrons from NADH to the respiratory chain. The immediate electron acceptor for the enzyme is believed to be ubiquinone. The sequence is that of NADH-ubiquinone oxidoreductase chain 1 (MT-ND1) from Excalfactoria chinensis (Blue-breasted quail).